Consider the following 374-residue polypeptide: Chaperone protein DnaJ (374 aa).

One can recognise a J domain in the interval Ser4–Gly69. The segment at Gly136–Lys213 adopts a CR-type zinc-finger fold. Zn(2+) contacts are provided by Cys149, Cys152, Cys165, Cys168, Cys187, Cys190, Cys201, and Cys204. CXXCXGXG motif repeat units lie at residues Cys149 to Gly156, Cys165 to Gly172, Cys187 to Gly194, and Cys201 to Gly208.

The protein belongs to the DnaJ family. Homodimer. It depends on Zn(2+) as a cofactor.

It is found in the cytoplasm. In terms of biological role, participates actively in the response to hyperosmotic and heat shock by preventing the aggregation of stress-denatured proteins and by disaggregating proteins, also in an autonomous, DnaK-independent fashion. Unfolded proteins bind initially to DnaJ; upon interaction with the DnaJ-bound protein, DnaK hydrolyzes its bound ATP, resulting in the formation of a stable complex. GrpE releases ADP from DnaK; ATP binding to DnaK triggers the release of the substrate protein, thus completing the reaction cycle. Several rounds of ATP-dependent interactions between DnaJ, DnaK and GrpE are required for fully efficient folding. Also involved, together with DnaK and GrpE, in the DNA replication of plasmids through activation of initiation proteins. This is Chaperone protein DnaJ from Campylobacter jejuni subsp. jejuni serotype O:6 (strain 81116 / NCTC 11828).